The sequence spans 196 residues: Putative 3-methyladenine DNA glycosylase (196 aa).

It belongs to the DNA glycosylase MPG family.

This is Putative 3-methyladenine DNA glycosylase from Chlamydia pneumoniae (Chlamydophila pneumoniae).